A 206-amino-acid polypeptide reads, in one-letter code: Ribosomal RNA small subunit methyltransferase G (206 aa).

S-adenosyl-L-methionine is bound by residues G74, L79, 125 to 126 (VE), and R140.

This sequence belongs to the methyltransferase superfamily. RNA methyltransferase RsmG family.

It localises to the cytoplasm. It carries out the reaction guanosine(527) in 16S rRNA + S-adenosyl-L-methionine = N(7)-methylguanosine(527) in 16S rRNA + S-adenosyl-L-homocysteine. Specifically methylates the N7 position of guanine in position 527 of 16S rRNA. This chain is Ribosomal RNA small subunit methyltransferase G, found in Shewanella frigidimarina (strain NCIMB 400).